The sequence spans 81 residues: uncharacterized protein (81 aa).

It to Synechocystis PCC 6803 ssr2439.

Functionally, may have a regulatory function. This is an uncharacterized protein from Synechococcus elongatus (strain ATCC 33912 / PCC 7942 / FACHB-805) (Anacystis nidulans R2).